The chain runs to 179 residues: Large ribosomal subunit protein uL5 (179 aa).

The protein belongs to the universal ribosomal protein uL5 family. Part of the 50S ribosomal subunit; part of the 5S rRNA/L5/L18/L25 subcomplex. Contacts the 5S rRNA and the P site tRNA. Forms a bridge to the 30S subunit in the 70S ribosome.

This is one of the proteins that bind and probably mediate the attachment of the 5S RNA into the large ribosomal subunit, where it forms part of the central protuberance. In the 70S ribosome it contacts protein S13 of the 30S subunit (bridge B1b), connecting the 2 subunits; this bridge is implicated in subunit movement. Contacts the P site tRNA; the 5S rRNA and some of its associated proteins might help stabilize positioning of ribosome-bound tRNAs. This is Large ribosomal subunit protein uL5 from Trichlorobacter lovleyi (strain ATCC BAA-1151 / DSM 17278 / SZ) (Geobacter lovleyi).